Reading from the N-terminus, the 286-residue chain is Probable aquaporin PIP2-5 (286 aa).

M1 is modified (N-acetylmethionine). The segment covering 1–18 (MTKEVVGDKRSFSGKDYQ) has biased composition (basic and acidic residues). A disordered region spans residues 1–23 (MTKEVVGDKRSFSGKDYQDPPPE). Over 1–38 (MTKEVVGDKRSFSGKDYQDPPPEPLFDATELGKWSFYR) the chain is Cytoplasmic. K3 carries the post-translational modification N6,N6-dimethyllysine. A helical transmembrane segment spans residues 39–59 (ALIAEFIATLLFLYVTIMTVI). Residues 60 to 75 (GYKSQTDPALNPDQCT) lie on the Extracellular side of the membrane. Residues 76-96 (GVGVLGIAWAFGGMIFILVYC) traverse the membrane as a helical segment. The Cytoplasmic segment spans residues 97-124 (TAGISGGHINPAVTFGLLLARKVTLVRA). The NPA 1 signature appears at 106 to 108 (NPA). A helical transmembrane segment spans residues 125-145 (VMYMVAQCLGAICGVALVKAF). The Extracellular segment spans residues 146–165 (QSAYFTRYGGGANGLSDGYS). Residues 166-186 (IGTGVAAEIIGTFVLVYTVFS) traverse the membrane as a helical segment. Residues 187 to 200 (ATDPKRSARDSHVP) lie on the Cytoplasmic side of the membrane. Residues 201–221 (VLAPLPIGFAVFIVHLATIPI) form a helical membrane-spanning segment. Over 222–248 (TGTGINPARSLGAAIIYNKDKAWDHHW) the chain is Extracellular. Positions 227–229 (NPA) match the NPA 2 motif. Residues 249–269 (IFWVGPFAGAAIAAFYHQFVL) form a helical membrane-spanning segment. Residues 270–286 (RAGAIKALGSFRSQPHV) are Cytoplasmic-facing. A phosphoserine mark is found at S279 and S282.

This sequence belongs to the MIP/aquaporin (TC 1.A.8) family. PIP (TC 1.A.8.11) subfamily. Expressed in green siliques.

It localises to the cell membrane. Functionally, aquaporins facilitate the transport of water and small neutral solutes across cell membranes. This is Probable aquaporin PIP2-5 (PIP2-5) from Arabidopsis thaliana (Mouse-ear cress).